The sequence spans 400 residues: S-adenosylmethionine synthase (400 aa).

Residue histidine 17 coordinates ATP. Aspartate 19 lines the Mg(2+) pocket. A K(+)-binding site is contributed by glutamate 45. 2 residues coordinate L-methionine: glutamate 58 and glutamine 101. The flexible loop stretch occupies residues 101-111; that stretch reads QSADIAMGVDQ. ATP-binding positions include 177 to 179, 244 to 245, aspartate 253, 259 to 260, alanine 276, and lysine 280; these read DGK, RF, and RK. Aspartate 253 contacts L-methionine. Residue lysine 284 participates in L-methionine binding.

It belongs to the AdoMet synthase family. As to quaternary structure, homotetramer; dimer of dimers. It depends on Mg(2+) as a cofactor. K(+) serves as cofactor.

The protein localises to the cytoplasm. It catalyses the reaction L-methionine + ATP + H2O = S-adenosyl-L-methionine + phosphate + diphosphate. The protein operates within amino-acid biosynthesis; S-adenosyl-L-methionine biosynthesis; S-adenosyl-L-methionine from L-methionine: step 1/1. Functionally, catalyzes the formation of S-adenosylmethionine (AdoMet) from methionine and ATP. The overall synthetic reaction is composed of two sequential steps, AdoMet formation and the subsequent tripolyphosphate hydrolysis which occurs prior to release of AdoMet from the enzyme. This Bacillus velezensis (strain DSM 23117 / BGSC 10A6 / LMG 26770 / FZB42) (Bacillus amyloliquefaciens subsp. plantarum) protein is S-adenosylmethionine synthase.